The primary structure comprises 243 residues: Exosome complex component Rrp41 (243 aa).

Belongs to the RNase PH family. Rrp41 subfamily. Component of the archaeal exosome complex. Forms a hexameric ring-like arrangement composed of 3 Rrp41-Rrp42 heterodimers. The hexameric ring associates with a trimer of Rrp4 and/or Csl4 subunits.

Its subcellular location is the cytoplasm. Catalytic component of the exosome, which is a complex involved in RNA degradation. Has 3'-&gt;5' exoribonuclease activity. Can also synthesize heteromeric RNA-tails. This Cenarchaeum symbiosum (strain A) protein is Exosome complex component Rrp41.